The primary structure comprises 329 residues: GTP 3',8-cyclase (329 aa).

The Radical SAM core domain occupies 8-234 (AFARKFYYLR…QLRQRSDGPA (227 aa)). Residue R17 participates in GTP binding. [4Fe-4S] cluster is bound by residues C24 and C28. Y30 serves as a coordination point for S-adenosyl-L-methionine. A [4Fe-4S] cluster-binding site is contributed by C31. R68 serves as a coordination point for GTP. G72 serves as a coordination point for S-adenosyl-L-methionine. T99 contributes to the GTP binding site. S-adenosyl-L-methionine is bound at residue S123. Residue K160 coordinates GTP. An S-adenosyl-L-methionine-binding site is contributed by M194. C257 and C260 together coordinate [4Fe-4S] cluster. GTP is bound at residue 262 to 264 (RLR). Residue C274 participates in [4Fe-4S] cluster binding.

This sequence belongs to the radical SAM superfamily. MoaA family. As to quaternary structure, monomer and homodimer. The cofactor is [4Fe-4S] cluster.

The enzyme catalyses GTP + AH2 + S-adenosyl-L-methionine = (8S)-3',8-cyclo-7,8-dihydroguanosine 5'-triphosphate + 5'-deoxyadenosine + L-methionine + A + H(+). Its pathway is cofactor biosynthesis; molybdopterin biosynthesis. In terms of biological role, catalyzes the cyclization of GTP to (8S)-3',8-cyclo-7,8-dihydroguanosine 5'-triphosphate. The chain is GTP 3',8-cyclase from Escherichia coli O7:K1 (strain IAI39 / ExPEC).